Reading from the N-terminus, the 150-residue chain is SsrA-binding protein (150 aa).

Belongs to the SmpB family.

The protein localises to the cytoplasm. In terms of biological role, required for rescue of stalled ribosomes mediated by trans-translation. Binds to transfer-messenger RNA (tmRNA), required for stable association of tmRNA with ribosomes. tmRNA and SmpB together mimic tRNA shape, replacing the anticodon stem-loop with SmpB. tmRNA is encoded by the ssrA gene; the 2 termini fold to resemble tRNA(Ala) and it encodes a 'tag peptide', a short internal open reading frame. During trans-translation Ala-aminoacylated tmRNA acts like a tRNA, entering the A-site of stalled ribosomes, displacing the stalled mRNA. The ribosome then switches to translate the ORF on the tmRNA; the nascent peptide is terminated with the 'tag peptide' encoded by the tmRNA and targeted for degradation. The ribosome is freed to recommence translation, which seems to be the essential function of trans-translation. This is SsrA-binding protein from Rubrobacter xylanophilus (strain DSM 9941 / JCM 11954 / NBRC 16129 / PRD-1).